A 1331-amino-acid chain; its full sequence is Lysine-specific demethylase 3A-A (1331 aa).

Disordered stretches follow at residues 243–280, 358–381, and 497–532; these read LNDK…PSKD, TPPQ…TQNL, and KVVK…VTYP. The segment covering 266-280 has biased composition (basic and acidic residues); sequence TELKQTRNEEVPSKD. The C6-type zinc-finger motif lies at 683–708; the sequence is CDACDTTIFNLHWVCPKCGFGVCVDC. The LXXLL motif signature appears at 894–898; it reads LRNLL. The region spanning 1086-1291 is the JmjC domain; sequence RREGKLNLAA…HCFWLTQEFR (206 aa). Positions 1130, 1132, and 1259 each coordinate Fe cation.

Belongs to the JHDM2 histone demethylase family. Fe(2+) serves as cofactor.

It localises to the cytoplasm. It is found in the nucleus. It catalyses the reaction N(6),N(6)-dimethyl-L-lysyl(9)-[histone H3] + 2 2-oxoglutarate + 2 O2 = L-lysyl(9)-[histone H3] + 2 formaldehyde + 2 succinate + 2 CO2. Histone demethylase that specifically demethylates 'Lys-9' of histone H3, thereby playing a central role in histone code. Preferentially demethylates mono- and dimethylated H3 'Lys-9' residue, with a preference for dimethylated residue, while it has weak or no activity on trimethylated H3 'Lys-9'. Demethylation of Lys residue generates formaldehyde and succinate. The polypeptide is Lysine-specific demethylase 3A-A (kdm3a-a) (Xenopus laevis (African clawed frog)).